Reading from the N-terminus, the 317-residue chain is Porphobilinogen deaminase (317 aa).

Cysteine 245 bears the S-(dipyrrolylmethanemethyl)cysteine mark.

Belongs to the HMBS family. As to quaternary structure, monomer. Dipyrromethane is required as a cofactor.

It catalyses the reaction 4 porphobilinogen + H2O = hydroxymethylbilane + 4 NH4(+). It functions in the pathway porphyrin-containing compound metabolism; protoporphyrin-IX biosynthesis; coproporphyrinogen-III from 5-aminolevulinate: step 2/4. Its pathway is porphyrin-containing compound metabolism; chlorophyll biosynthesis. Its function is as follows. Tetrapolymerization of the monopyrrole PBG into the hydroxymethylbilane pre-uroporphyrinogen in several discrete steps. This Prochlorococcus marinus (strain MIT 9303) protein is Porphobilinogen deaminase.